Reading from the N-terminus, the 1240-residue chain is MPGTYAPVPNVYHLLDHLTFRSSVVIPNSNFVGRIWSDYWALQDNIVIRVSPEGAKDADYCHNSNISPILSPLKTITEYGTLHPTIDKDASERGYPSARMASSFFKLASCQARQVKIDPTRFLEFLLVTASSPRVPSGVDSDQPNPWLPETSPALQAIWQIMQRYKLNGNYYAPALVVNTGAVWWIPPPGRTNCVTVQFLITDLINLAVNAFATRLAPELEMCAVRVYLAAASTPNYAHALLDLKSIFPNLSLHSMYREGEFGGKCPRIEWTEPRSSYRFKWIGVTQLYEGLRPLTPSRDSKALLKMRDSGLEDVAKVIITMRRDHPRHTSDSVRFVRGVLSLISGMYLVRPPTMSVLREYSQTPQIEEPIPPDWWTGAVGNLSYFNDKAKGPLAHLYSVWLEAARQVVMDPSTHDPLTQAIYKTQFVTPRGGSSAALKQALVESKVELPDFSGTGVKRSSKIYQTAQLAHFSFQTLIPTIMGQVTLGIRNQVQRRARSIMPMSNPQQTVSVPHTLVANYINKHMNRSTTSGSAVQDKVIPLLLYASTPPRTVINVDIKACDASITYAAFLAPICGAMHQGFDLGDPSLPFMNVPSSTQYDRRNPAAPYNRPVSGLQTMTQHLARLYQAGFSYKVDDPFSSGNSFVFPTTTFPSGSTATSTEHTANNGAMADFFLREYVPQHAKSSTLKFIVKDMNIQNNYVCQGDDGMLIIPDLGTKRISPEDLAELMELLEKYGRGFGWVYDIDSSDSAEYLKLYALFGARIPNISRHPPVGKEYASPETGEIWPSLVNIAMGSFYNGVTDCLEWRDWLKFSWAFACFASRGSFHPKTGPRVDAQYPVWSFIYMGLPPILLPGQTPFLTSVYMPAGDQGIFAILHQWRDYLTARATSDYPPLKRRHPVWHLADVPSLLSDLGVYRGYWAAQVSRRPEPSPDDADPASVEAMSAALSTYLLKDPVLRDRVVRGTNAWRRLTDTHPGRLPSRVPSLLDVPTRWIKAGRDADKPRPSAVAMMMKDIQRAASSSRKDFSRLLELYLHVHVHLGPPVPLAVDPEVPHVAGADILNDDHWYKVTSLGPIAQSTKKYFDATLFVGKTVSGLDVEAVDATLLRMSILGAEPEEYHAFLAGIGMSDAEAHRIASAISLADAQIVQLARTVNLAVPSSWMSLDFDTLIRSHSYPRQPGISDSSTLVRERASWINSVLRLLCATVAMSRVGPVCQATVSSVDGGVNQIVGCLRAWMRDV.

The RdRp catalytic domain occupies 516-764; sequence LVANYINKHM…KLYALFGARI (249 aa).

The protein belongs to the reoviridae RNA-directed RNA polymerase family.

The protein localises to the virion. The enzyme catalyses RNA(n) + a ribonucleoside 5'-triphosphate = RNA(n+1) + diphosphate. Functionally, RNA-directed RNA polymerase that is involved in transcription and genome replication. Following infection, it catalyzes the synthesis of fully conservative plus strands. After core assembly, which consists in recruitment of one capped plus-strand for each genomic segments and polymerase complexes, the polymerase switches mode and catalyzes the synthesis of complementary minus-strands. This is RNA-directed RNA polymerase VP2 (S2) from Oncorhynchus keta (Chum salmon).